An 81-amino-acid chain; its full sequence is Photosystem I iron-sulfur center (81 aa).

4Fe-4S ferredoxin-type domains follow at residues Ser2–Trp31 and Met39–Tyr68. Residues Cys11, Cys14, Cys17, Cys21, Cys48, Cys51, Cys54, and Cys58 each coordinate [4Fe-4S] cluster.

The eukaryotic PSI reaction center is composed of at least 11 subunits. The cofactor is [4Fe-4S] cluster.

The protein localises to the plastid. Its subcellular location is the chloroplast thylakoid membrane. The enzyme catalyses reduced [plastocyanin] + hnu + oxidized [2Fe-2S]-[ferredoxin] = oxidized [plastocyanin] + reduced [2Fe-2S]-[ferredoxin]. Functionally, apoprotein for the two 4Fe-4S centers FA and FB of photosystem I (PSI); essential for photochemical activity. FB is the terminal electron acceptor of PSI, donating electrons to ferredoxin. The C-terminus interacts with PsaA/B/D and helps assemble the protein into the PSI complex. Required for binding of PsaD and PsaE to PSI. PSI is a plastocyanin/cytochrome c6-ferredoxin oxidoreductase, converting photonic excitation into a charge separation, which transfers an electron from the donor P700 chlorophyll pair to the spectroscopically characterized acceptors A0, A1, FX, FA and FB in turn. This Stigeoclonium helveticum (Green alga) protein is Photosystem I iron-sulfur center.